An 864-amino-acid polypeptide reads, in one-letter code: MHERYVPADVEAAAQGDWRAADAYKTREDSQKPKFYCVSMLPYPSGKLHMGHVRNYTINDVMYRYLRMNGYNTLMPMGWDAFGMPAENAAMANGVPPAKWTYDNIDYMKGQMQSMGLAIDWSREIATCKPDYYKWNQWLFLKMLEKGIAYKKTGTVNWDPVDQTVLANEQVIDGRGWRSGALVEKREIPMYYLRITQYADELLNDLDGLGWPERVKIMQQNWIGKSFGVNFGFPYELDGEKALLRVFTTRADTIMGVTFCAVAAEHPLATRLAQGKPELQAFIDECKRGGVAEADVATMEKKGVATGFSVSHPLTGEPVEVWIGNYVLMSYGEGAVMGVPGHDERDFAFAKKYGLPIKQVIASEGQTYSLDAWQEWYGDKETAVCVNSGKYDGLRYADAVDAVAADLKAGGYGDKQVTWRLRDWGVSRQRYWGTPIPIIHCPSCGDVPVPEQDLPVVLPEDLVPDGSGNPLAKSEAFLNCSCPKCGAAAKRETDTMDTFVDSSWYFSRYTAPDADTMVDARTDYWMPMDQYIGGIEHAILHLLYSRFWTKVMRDLGLVKFGEPAKNLLTQGMVLNETFYREDASGKKTWYNPADVTVTHDDKGRPVGATLNTDGQPVVLGGIEKMSKSKNNGVDPQVLIDQYGADTARLFTMFAAPPEQQLEWSGAGVEGASRFLRRVWSFGATNREALAARAGFDAAALGDADKALRREIYSVLKQADFDYQRLQYNTVVSAAMKMLNAIDGAKGATPAVLRETYGVLLRVLYPVVPHVTFELWKALGYADEFGPLLDAPWPKVDEAALEQAEIELVLQVNGKVRGALKVAKGASRDAIEAAAVADEAFAKFSDGKPAKKIVVVPGRLVNIVV.

A 'HIGH' region motif is present at residues 42-52; the sequence is PYPSGKLHMGH. The short motif at 624–628 is the 'KMSKS' region element; the sequence is KMSKS. Position 627 (Lys-627) interacts with ATP.

It belongs to the class-I aminoacyl-tRNA synthetase family.

It localises to the cytoplasm. It catalyses the reaction tRNA(Leu) + L-leucine + ATP = L-leucyl-tRNA(Leu) + AMP + diphosphate. This Burkholderia ambifaria (strain MC40-6) protein is Leucine--tRNA ligase.